A 90-amino-acid polypeptide reads, in one-letter code: RNA-binding protein Hfq (90 aa).

The 60-residue stretch at 9 to 68 folds into the Sm domain; the sequence is DPFLNALRRERVPVSIYLVNGIKLQGQVESFDQFVILLKNTVSQMVYKHAISTVVPARPF.

This sequence belongs to the Hfq family. As to quaternary structure, homohexamer.

Its function is as follows. RNA chaperone that binds small regulatory RNA (sRNAs) and mRNAs to facilitate mRNA translational regulation in response to envelope stress, environmental stress and changes in metabolite concentrations. Also binds with high specificity to tRNAs. The polypeptide is RNA-binding protein Hfq (Shewanella oneidensis (strain ATCC 700550 / JCM 31522 / CIP 106686 / LMG 19005 / NCIMB 14063 / MR-1)).